Here is a 353-residue protein sequence, read N- to C-terminus: Photosystem II D2 protein (353 aa).

Threonine 2 bears the N-acetylthreonine mark. Threonine 2 carries the post-translational modification Phosphothreonine. Residues 41-61 form a helical membrane-spanning segment; it reads CAYFSLGGWLTGTTFVTSWYT. Histidine 118 serves as a coordination point for chlorophyll a. Residues 125–141 form a helical membrane-spanning segment; sequence GFMLRQFELARSVQLRP. Positions 130 and 143 each coordinate pheophytin a. The helical transmembrane segment at 153–166 threads the bilayer; it reads VFVSVFLIYPLGQS. Residue histidine 198 participates in chlorophyll a binding. Residues 208 to 228 traverse the membrane as a helical segment; that stretch reads AALLCAIHGATVENTLFEDGD. The a plastoquinone site is built by histidine 215 and phenylalanine 262. Histidine 215 serves as a coordination point for Fe cation. Histidine 269 provides a ligand contact to Fe cation. A helical transmembrane segment spans residues 279-295; that stretch reads GLWMSAIGVVGLALNLR.

The protein belongs to the reaction center PufL/M/PsbA/D family. PSII is composed of 1 copy each of membrane proteins PsbA, PsbB, PsbC, PsbD, PsbE, PsbF, PsbH, PsbI, PsbJ, PsbK, PsbL, PsbM, PsbT, PsbX, PsbY, PsbZ, Psb30/Ycf12, at least 3 peripheral proteins of the oxygen-evolving complex and a large number of cofactors. It forms dimeric complexes. The D1/D2 heterodimer binds P680, chlorophylls that are the primary electron donor of PSII, and subsequent electron acceptors. It shares a non-heme iron and each subunit binds pheophytin, quinone, additional chlorophylls, carotenoids and lipids. There is also a Cl(-1) ion associated with D1 and D2, which is required for oxygen evolution. The PSII complex binds additional chlorophylls, carotenoids and specific lipids. serves as cofactor.

Its subcellular location is the plastid. The protein localises to the chloroplast thylakoid membrane. It catalyses the reaction 2 a plastoquinone + 4 hnu + 2 H2O = 2 a plastoquinol + O2. Functionally, photosystem II (PSII) is a light-driven water:plastoquinone oxidoreductase that uses light energy to abstract electrons from H(2)O, generating O(2) and a proton gradient subsequently used for ATP formation. It consists of a core antenna complex that captures photons, and an electron transfer chain that converts photonic excitation into a charge separation. The D1/D2 (PsbA/PsbD) reaction center heterodimer binds P680, the primary electron donor of PSII as well as several subsequent electron acceptors. D2 is needed for assembly of a stable PSII complex. This chain is Photosystem II D2 protein, found in Chara vulgaris (Common stonewort).